Consider the following 521-residue polypeptide: MATIRPDDKAIDAAARHYGITLDKTARLEWPALIDGALGSYDVVDQLYADEATPPTTSREHAVPSASENPLSAWYVTTSIPPTSDGVLTGRRVAIKDNVTVAGVPMMNGSRTVEGFTPSRDATVVTRLLAAGATVAGKAVCEDLCFSGSSFTPASGPVRNPWDRQREAGGSSGGSAALVANGDVDFAIGGDQGGSIRIPAAFCGVVGHKPTFGLVPYTGAFPIERTIDHLGPITRTVHDAALMLSVIAGRDGNDPRQADSVEAGDYLSTLDSDVDGLRIGIVREGFGHAVSQPEVDDAVRAAAHSLTEIGCTVEEVNIPWHLHAFHIWNVIATDGGAYQMLDGNGYGMNAEGLYDPELMAHFASRRIQHADALSETVKLVALTGHHGITTLGGASYGKARNLVPLARAAYDTALRQFDVLVMPTLPYVASELPAKDVDRATFITKALGMIANTAPFDVTGHPSLSVPAGLVNGLPVGMMITGRHFDDATVLRVGRAFEKLRGAFPTPAERASNSAPQLSPA.

Residues K96 and S171 each act as charge relay system in the active site. The disordered stretch occupies residues 155-174 (SGPVRNPWDRQREAGGSSGG). S195 (acyl-ester intermediate) is an active-site residue.

This sequence belongs to the amidase family. As to quaternary structure, homodimer.

It carries out the reaction a monocarboxylic acid amide + H2O = a monocarboxylate + NH4(+). In terms of biological role, hydrolyzes propionamides efficiently, and also at a lower efficiency, acetamide, acrylamide and indoleacetamide. This enzyme seems to be stereospecific and can lead to the production of a single enantiomer. In Rhodococcus erythropolis (Arthrobacter picolinophilus), this protein is Amidase (amdA).